The following is a 436-amino-acid chain: RNA polymerase sigma-54 factor (436 aa).

Residues Thr324–Ile343 constitute a DNA-binding region (H-T-H motif). The short motif at Ser413 to Arg421 is the RPON box element.

Belongs to the sigma-54 factor family. As to quaternary structure, interacts transiently with the RNAP core.

In terms of biological role, sigma factors are initiation factors that promote the attachment of RNA polymerase (RNAP) to specific initiation sites and are then released. This sigma factor is responsible for the expression of the levanase operon. The open complex (sigma-54 and core RNA polymerase) serves as the receptor for receipt of the melting signal from the remotely bound activator protein LevR for the expression of the levanase operon. Associates with the RNAP core only in stationary phase cells. This is RNA polymerase sigma-54 factor (sigL) from Bacillus subtilis (strain 168).